The following is a 375-amino-acid chain: 23S rRNA (uracil(747)-C(5))-methyltransferase RlmC (375 aa).

Positions 3, 11, 14, and 87 each coordinate [4Fe-4S] cluster. 4 residues coordinate S-adenosyl-L-methionine: Q212, F241, E262, and N307. C334 acts as the Nucleophile in catalysis.

Belongs to the class I-like SAM-binding methyltransferase superfamily. RNA M5U methyltransferase family. RlmC subfamily.

The enzyme catalyses uridine(747) in 23S rRNA + S-adenosyl-L-methionine = 5-methyluridine(747) in 23S rRNA + S-adenosyl-L-homocysteine + H(+). In terms of biological role, catalyzes the formation of 5-methyl-uridine at position 747 (m5U747) in 23S rRNA. The sequence is that of 23S rRNA (uracil(747)-C(5))-methyltransferase RlmC from Yersinia enterocolitica serotype O:8 / biotype 1B (strain NCTC 13174 / 8081).